Consider the following 1040-residue polypeptide: MQVLPPGSTGGPSRLFILRPVATTLLMAAILLAGIIGYRFLPVAALPEVDYPTIQVVTLYPGASPDVMTSAVTAPLERQFGQMSGLKQMSSQSSGGASVVTLQFQLTLPLDVAEQEVQAAINAATNLLPSDLPNPPIYSKVNPADPPIMTLAVTSNAMPMTQVEDMVETRVAQKISQVSGVGLVTLAGGQRPAVRVKLNAQAVAALGLTSETVRTAITGANVNSAKGSLDGPERAVTLSANDQMQSADEYRRLIIAYQNGAPVRLGDVATVEQGAENSWLGAWANQAPAIVMNVQRQPGANIIATADSIRQMLPQLTESLPKSVKVTVLSDRTTNIRASVRDTQFELMLAIALVVMIIYLFLRNIPATIIPGVAVPLSLIGTFAVMVFLDFSINNLTLMALTIATGFVVDDAIVVIENISRYIEKGEKPLAAALKGAGEIGFTIISLTFSLIAVLIPLLFMGDIVGRLFREFAVTLAVAILISAVVSLTLTPMMCARMLSQQSLRKQNRFSRACERMFDRVIASYGRGLAKVLNHPWLTLSVAFATLLLSVMLWIVIPKGFFPVQDNGIIQGTLQAPQSSSYASMAQRQRQVAERILQDPAVQSLTTFVGVDGANPTLNSARLQINLKPLDARDDRVQQVISRLQTAVATIPGVALYLQPTQDLTIDTQVSRTQYQFTLQATTLDALSHWVPKLQNALQSLPQLSEVSSDWQDRGLAAWVNVDRDSASRLGISMADVDNALYNAFGQRLISTIYTQANQYRVVLEHNTASTPGLAALETIRLTSRDGGTVPLSAIARIEQRFAPLSINHLDQFPVTTFSFNVPEGYSLGDAVQAILDTEKTLALPADITTQFQGSTLAFQAALGSTVWLIVAAVVAMYIVLGVLYESFIHPITILSTLPTAGVGALLALIIAGSELDIIAIIGIILLIGIVKKNAIMMIDFALAAEREQGMSPRDAIFQACLLRFRPILMTTLAALLGALPLMLSTGVGAELRRPLGIAMVGGLLVSQVLTLFTTPVIYLLFDRLSLYVKSRFPRHKEEA.

The next 12 membrane-spanning stretches (helical) occupy residues 25 to 45, 347 to 367, 369 to 389, 396 to 416, 440 to 460, 472 to 492, 537 to 557, 863 to 883, 888 to 908, 910 to 930, 968 to 988, and 998 to 1018; these read LLMAAILLAGIIGYRFLPVAA, LMLAIALVVMIIYLFLRNIPA, IIPGVAVPLSLIGTFAVMVFL, LTLMALTIATGFVVDDAIVVI, IGFTIISLTFSLIAVLIPLLF, FAVTLAVAILISAVVSLTLTP, WLTLSVAFATLLLSVMLWIVI, LGSTVWLIVAAVVAMYIVLGV, FIHPITILSTLPTAGVGALLA, IIAGSELDIIAIIGIILLIGI, ILMTTLAALLGALPLMLSTGV, and IAMVGGLLVSQVLTLFTTPVI.

This sequence belongs to the resistance-nodulation-cell division (RND) (TC 2.A.6) family. MdtB subfamily. As to quaternary structure, part of a tripartite efflux system composed of MdtA, MdtB and MdtC. MdtB forms a heteromultimer with MdtC.

The protein localises to the cell inner membrane. The chain is Multidrug resistance protein MdtB from Salmonella agona (strain SL483).